The sequence spans 304 residues: UDP-N-acetylenolpyruvoylglucosamine reductase (304 aa).

The region spanning 33–212 (MGGLADLFLI…KEMMDDLTHK (180 aa)) is the FAD-binding PCMH-type domain. Arg-176 is a catalytic residue. Residue Ser-226 is the Proton donor of the active site. Glu-296 is a catalytic residue.

This sequence belongs to the MurB family. The cofactor is FAD.

It localises to the cytoplasm. It carries out the reaction UDP-N-acetyl-alpha-D-muramate + NADP(+) = UDP-N-acetyl-3-O-(1-carboxyvinyl)-alpha-D-glucosamine + NADPH + H(+). The protein operates within cell wall biogenesis; peptidoglycan biosynthesis. Cell wall formation. This chain is UDP-N-acetylenolpyruvoylglucosamine reductase, found in Exiguobacterium sibiricum (strain DSM 17290 / CCUG 55495 / CIP 109462 / JCM 13490 / 255-15).